The sequence spans 208 residues: ATP-dependent Clp protease proteolytic subunit (208 aa).

Catalysis depends on serine 107, which acts as the Nucleophile. Histidine 132 is an active-site residue.

Belongs to the peptidase S14 family. Fourteen ClpP subunits assemble into 2 heptameric rings which stack back to back to give a disk-like structure with a central cavity, resembling the structure of eukaryotic proteasomes.

The protein resides in the cytoplasm. The catalysed reaction is Hydrolysis of proteins to small peptides in the presence of ATP and magnesium. alpha-casein is the usual test substrate. In the absence of ATP, only oligopeptides shorter than five residues are hydrolyzed (such as succinyl-Leu-Tyr-|-NHMec, and Leu-Tyr-Leu-|-Tyr-Trp, in which cleavage of the -Tyr-|-Leu- and -Tyr-|-Trp bonds also occurs).. In terms of biological role, cleaves peptides in various proteins in a process that requires ATP hydrolysis. Has a chymotrypsin-like activity. Plays a major role in the degradation of misfolded proteins. The chain is ATP-dependent Clp protease proteolytic subunit from Methylobacterium radiotolerans (strain ATCC 27329 / DSM 1819 / JCM 2831 / NBRC 15690 / NCIMB 10815 / 0-1).